The following is a 409-amino-acid chain: MPSIVSLTAALTFVGAVIASPVEKRSAFSVEQVPHTTYLKNGPAQKVKTLRKYGKPVPQSLLDAAESRDAVGETFTASAVGDGSDPAVPSDQYDSSYLSPVTVGSTTVELDFDTGSADLWVFSSLQASSQLSGHQYYQADASKLKSGYSWKISYGDGSGASGKVYADKVVVGGVTATSQAVEAATSVSAQFSRDSNTDGLLGLAFSSINTVSPEPQKTFFDTVKPQLAEPLFAVNLKYHAAGTYDFGYIDKSKYTGPITYVNVDDSQGFWGISATAYGVGGTTTQRAISGILDTGTTLVYTDTAIVKAYYAKVSGAKLDNIQGGYVFPCSATLPNFSITVGGVAQVVPGKHINYSPVDSSGTTCFGGIQTNDGLGMSIFGDIFLKSKYVVHEAAPDSPPRIGLAQSASV.

A signal peptide spans Met1–Ala19. Positions Ser20 to Ala65 are cleaved as a propeptide — activation peptide. Residues Tyr97–Ala404 form the Peptidase A1 domain. Catalysis depends on residues Asp113 and Asp293. Residues Cys329 and Cys364 are joined by a disulfide bond. An N-linked (GlcNAc...) asparagine glycan is attached at Asn335.

This sequence belongs to the peptidase A1 family. In terms of assembly, monomer.

It localises to the secreted. In terms of biological role, secreted aspartic endopeptidase that allows assimilation of proteinaceous substrates. The scissile peptide bond is attacked by a nucleophilic water molecule activated by two aspartic residues in the active site. Shows a broad primary substrate specificity. Favors hydrophobic residues at the P1 and P1' positions. The polypeptide is Aspartic protease pepA (Leptosphaeria maculans (strain JN3 / isolate v23.1.3 / race Av1-4-5-6-7-8) (Blackleg fungus)).